The following is a 447-amino-acid chain: Tubulin beta chain (447 aa).

Residues Gln-11, Glu-69, Ser-138, Gly-142, Thr-143, Gly-144, Asn-204, and Asn-226 each coordinate GTP. Glu-69 contributes to the Mg(2+) binding site. A disordered region spans residues 427-447 (EAHMDDEEAEEAYEDEAPPEE). Positions 430 to 447 (MDDEEAEEAYEDEAPPEE) are enriched in acidic residues.

This sequence belongs to the tubulin family. In terms of assembly, dimer of alpha and beta chains. A typical microtubule is a hollow water-filled tube with an outer diameter of 25 nm and an inner diameter of 15 nM. Alpha-beta heterodimers associate head-to-tail to form protofilaments running lengthwise along the microtubule wall with the beta-tubulin subunit facing the microtubule plus end conferring a structural polarity. Microtubules usually have 13 protofilaments but different protofilament numbers can be found in some organisms and specialized cells. Mg(2+) serves as cofactor.

It localises to the cytoplasm. It is found in the cytoskeleton. Functionally, tubulin is the major constituent of microtubules, a cylinder consisting of laterally associated linear protofilaments composed of alpha- and beta-tubulin heterodimers. Microtubules grow by the addition of GTP-tubulin dimers to the microtubule end, where a stabilizing cap forms. Below the cap, tubulin dimers are in GDP-bound state, owing to GTPase activity of alpha-tubulin. The polypeptide is Tubulin beta chain (TBB1) (Uromyces fabae (Rust fungus)).